Here is a 361-residue protein sequence, read N- to C-terminus: 45 kDa calcium-binding protein (361 aa).

Positions 1 to 35 (MVWLVAMTSRQRSLCGLAAHGLWFLGLVLLMDATA) are cleaved as a signal peptide. The N-linked (GlcNAc...) asparagine glycan is linked to Asn39. 2 consecutive EF-hand domains span residues 97-132 (RSRR…KTAE) and 136-171 (EAVK…SKGH). Ser98 carries the post-translational modification Phosphoserine. Residues Asp110, Asn112, Asp114, Arg116, Glu121, Asp149, Asp151, Asp153, His155, and Glu160 each coordinate Ca(2+). The residue at position 192 (Thr192) is a Phosphothreonine. 4 EF-hand domains span residues 196–231 (LGNL…HSRG), 232–267 (MLKF…TVEN), 277–312 (WVKD…MNEY), and 313–348 (NALN…FTGS). Asp212 contributes to the Ca(2+) binding site. Thr216 bears the Phosphothreonine mark. Residues Glu219, Asp245, Asp247, Asp249, Gln251, and Glu256 each contribute to the Ca(2+) site. Thr264 carries the post-translational modification Phosphothreonine. Ca(2+) is bound by residues Asp290, Asn292, and Asp294. Thr298 carries the phosphothreonine modification. 6 residues coordinate Ca(2+): Glu301, Asp326, Asn328, Asn330, His332, and Glu337. The necessary for intracellular retention in Golgi apparatus lumen stretch occupies residues 308 to 361 (PMNEYNALNEAKQMIAIADENQNHHLEPEEILKYSEFFTGSKLMDYARNVHEEF).

Belongs to the CREC family. A membrane-associated isoform interacts with STX3 and STXBP1. A membrane-associated isoform is expressed in acini of the pancreas (at protein level). Ubiquitous.

The protein localises to the golgi apparatus lumen. In terms of biological role, a membrane-associated isoform may be involved in the exocytosis of zymogens by pancreatic acini. May regulate calcium-dependent activities in the endoplasmic reticulum lumen or post-ER compartment. The sequence is that of 45 kDa calcium-binding protein (Sdf4) from Rattus norvegicus (Rat).